We begin with the raw amino-acid sequence, 661 residues long: uncharacterized protein (661 aa).

The first 24 residues, 1 to 24 (MKTLKTLKIFIIVFIASVSLASFA), serve as a signal peptide directing secretion. Transmembrane regions (helical) follow at residues 226 to 246 (IIGAALILYTMFFAFNMALNT), 254 to 274 (IALFVIKFLFVAYFSIGLGPL), 410 to 430 (IILAAGLVFSVIFLSILLYFI), 436 to 456 (CMITIYVMTYISPIFIPMALF), 469 to 489 (VCISCALQPAVVAGFIALLIT), and 562 to 582 (VVSILAELLCVLVFSVIFYYF). Residues 629 to 661 (GKPLVGDKPGVGGKRKEGEQQGGDLASGSGGGK) form a disordered region.

This sequence belongs to the TrbL/VirB6 family.

Its subcellular location is the cell membrane. This is an uncharacterized protein from Rickettsia conorii (strain ATCC VR-613 / Malish 7).